An 88-amino-acid chain; its full sequence is Apolipoprotein C-I (88 aa).

Residues methionine 1–alanine 26 form the signal peptide.

It belongs to the apolipoprotein C1 family.

It is found in the secreted. Its function is as follows. Inhibitor of lipoprotein binding to the low density lipoprotein (LDL) receptor, LDL receptor-related protein, and very low density lipoprotein (VLDL) receptor. Associates with high density lipoproteins (HDL) and the triacylglycerol-rich lipoproteins in the plasma and makes up about 10% of the protein of the VLDL and 2% of that of HDL. Appears to interfere directly with fatty acid uptake and is also the major plasma inhibitor of cholesteryl ester transfer protein (CETP). Binds free fatty acids and reduces their intracellular esterification. Modulates the interaction of APOE with beta-migrating VLDL and inhibits binding of beta-VLDL to the LDL receptor-related protein. The chain is Apolipoprotein C-I (APOC1) from Ursus maritimus (Polar bear).